Here is a 457-residue protein sequence, read N- to C-terminus: Bifunctional protein GlmU (457 aa).

The pyrophosphorylase stretch occupies residues 1-230; it reads MPLSLPLHIV…AREVEGVNDL (230 aa). UDP-N-acetyl-alpha-D-glucosamine contacts are provided by residues 12–15, lysine 26, glutamine 78, 83–84, 105–107, glycine 140, glutamate 155, asparagine 170, and asparagine 228; these read LAAG, GT, and YGD. Aspartate 107 contacts Mg(2+). Asparagine 228 lines the Mg(2+) pocket. The segment at 231 to 251 is linker; that stretch reads WQLTQLERAWQIRAARALCLQ. Residues 252-457 are N-acetyltransferase; sequence GARVADPARL…DSWQRPKKKT (206 aa). Residues arginine 334 and lysine 352 each coordinate UDP-N-acetyl-alpha-D-glucosamine. The Proton acceptor role is filled by histidine 364. Positions 367 and 378 each coordinate UDP-N-acetyl-alpha-D-glucosamine. Residues alanine 381, 387 to 388, serine 406, alanine 424, and arginine 441 each bind acetyl-CoA; that span reads NY.

The protein in the N-terminal section; belongs to the N-acetylglucosamine-1-phosphate uridyltransferase family. In the C-terminal section; belongs to the transferase hexapeptide repeat family. In terms of assembly, homotrimer. Requires Mg(2+) as cofactor.

Its subcellular location is the cytoplasm. It catalyses the reaction alpha-D-glucosamine 1-phosphate + acetyl-CoA = N-acetyl-alpha-D-glucosamine 1-phosphate + CoA + H(+). It carries out the reaction N-acetyl-alpha-D-glucosamine 1-phosphate + UTP + H(+) = UDP-N-acetyl-alpha-D-glucosamine + diphosphate. The protein operates within nucleotide-sugar biosynthesis; UDP-N-acetyl-alpha-D-glucosamine biosynthesis; N-acetyl-alpha-D-glucosamine 1-phosphate from alpha-D-glucosamine 6-phosphate (route II): step 2/2. It participates in nucleotide-sugar biosynthesis; UDP-N-acetyl-alpha-D-glucosamine biosynthesis; UDP-N-acetyl-alpha-D-glucosamine from N-acetyl-alpha-D-glucosamine 1-phosphate: step 1/1. It functions in the pathway bacterial outer membrane biogenesis; LPS lipid A biosynthesis. Functionally, catalyzes the last two sequential reactions in the de novo biosynthetic pathway for UDP-N-acetylglucosamine (UDP-GlcNAc). The C-terminal domain catalyzes the transfer of acetyl group from acetyl coenzyme A to glucosamine-1-phosphate (GlcN-1-P) to produce N-acetylglucosamine-1-phosphate (GlcNAc-1-P), which is converted into UDP-GlcNAc by the transfer of uridine 5-monophosphate (from uridine 5-triphosphate), a reaction catalyzed by the N-terminal domain. The polypeptide is Bifunctional protein GlmU (Xylella fastidiosa (strain 9a5c)).